Reading from the N-terminus, the 261-residue chain is Mite allergen Eur m 3 (261 aa).

The N-terminal stretch at 1–18 (MVICNAIIVLLLAFNTLA) is a signal peptide. Residues 19 to 29 (NPILPSSPNAT) constitute a propeptide that is removed on maturation. The Peptidase S1 domain maps to 30–260 (IVGGQKAKAG…FIDWIDSKRS (231 aa)). Cysteines 54 and 70 form a disulfide. Active-site charge relay system residues include H69 and D114. Disulfide bonds link C181–C198 and C210–C236. S214 (charge relay system) is an active-site residue.

The protein belongs to the peptidase S1 family.

The protein localises to the secreted. The sequence is that of Mite allergen Eur m 3 (EURM3) from Euroglyphus maynei (Mayne's house dust mite).